The primary structure comprises 782 residues: Cleavage and polyadenylation specificity factor subunit 2 (782 aa).

A compositionally biased stretch (basic and acidic residues) spans lysine 407–aspartate 416. Positions lysine 407–arginine 449 are disordered. Residues isoleucine 417–aspartate 430 show a composition bias toward acidic residues. Residues serine 419, serine 420, and serine 423 each carry the phosphoserine modification. Residues histidine 439 to arginine 449 are compositionally biased toward basic and acidic residues. Serine 660 carries the phosphoserine modification.

It belongs to the metallo-beta-lactamase superfamily. RNA-metabolizing metallo-beta-lactamase-like family. CPSF2/YSH1 subfamily. Component of the cleavage and polyadenylation specificity factor (CPSF) complex, composed of CPSF1, CPSF2, CPSF3, CPSF4 and FIP1L1. Interacts with CPSF3, CSTF2 and SYMPK. Interacts with ZC3H3.

Its subcellular location is the nucleus. Its function is as follows. Component of the cleavage and polyadenylation specificity factor (CPSF) complex that play a key role in pre-mRNA 3'-end formation, recognizing the AAUAAA signal sequence and interacting with poly(A) polymerase and other factors to bring about cleavage and poly(A) addition. Involved in the histone 3' end pre-mRNA processing. This chain is Cleavage and polyadenylation specificity factor subunit 2 (CPSF2), found in Homo sapiens (Human).